Consider the following 187-residue polypeptide: Ribosome-recycling factor (187 aa).

Belongs to the RRF family.

The protein localises to the cytoplasm. Responsible for the release of ribosomes from messenger RNA at the termination of protein biosynthesis. May increase the efficiency of translation by recycling ribosomes from one round of translation to another. This is Ribosome-recycling factor from Methylobacterium radiotolerans (strain ATCC 27329 / DSM 1819 / JCM 2831 / NBRC 15690 / NCIMB 10815 / 0-1).